Here is a 137-residue protein sequence, read N- to C-terminus: Putative pre-16S rRNA nuclease (137 aa).

Belongs to the YqgF nuclease family.

The protein resides in the cytoplasm. Functionally, could be a nuclease involved in processing of the 5'-end of pre-16S rRNA. This Bacillus cereus (strain 03BB102) protein is Putative pre-16S rRNA nuclease.